The sequence spans 187 residues: CASP-like protein 2C1 (187 aa).

Residues 1 to 14 (MVAAARVVSGVKAE) lie on the Cytoplasmic side of the membrane. A helical membrane pass occupies residues 15-35 (GLLRGACAALAAAAALLLGLS). Residues 36-54 (TQTETVLLVRKKGTVKDVQ) lie on the Extracellular side of the membrane. The chain crosses the membrane as a helical span at residues 55–75 (ALWVLAMAAASAAGYHLLQLL). The Cytoplasmic portion of the chain corresponds to 76-97 (KCLYLGRGGGRALAWTCLLLDK). A helical transmembrane segment spans residues 98-118 (ACAYATFATTVAAAQACVVAL). Residues 119-139 (DGAHALQWTKLCNIYTRFCEQ) lie on the Extracellular side of the membrane. Residues 140 to 160 (VAGSLVLGMLAAVGTAVLSAA) traverse the membrane as a helical segment. The Cytoplasmic portion of the chain corresponds to 161-187 (SARNVFRHYYCSSHSPPAPPPETCDAH).

The protein belongs to the Casparian strip membrane proteins (CASP) family. In terms of assembly, homodimer and heterodimers.

It is found in the cell membrane. The polypeptide is CASP-like protein 2C1 (Zea mays (Maize)).